The following is an 881-amino-acid chain: MTTETGPDSEVKKAQEEAPQQPEAAAAVTTPVTPAGHGHPEANSNEKHPSQQDTRPAEQSLDMEEKDYSEADGLSERTTPSKAQKSPQKIAKKYKSAICRVTLLDASEYECEVEKHGRGQVLFDLVCEHLNLLEKDYFGLTFCDADSQKNWLDPSKEIKKQIRSSPWNFAFTVKFYPPDPAQLTEDITRYYLCLQLRADIITGRLPCSFVTHALLGSYAVQAELGDYDAEEHVGNYVSELRFAPNQTRELEERIMELHKTYRGMTPGEAEIHFLENAKKLSMYGVDLHHAKDSEGIDIMLGVCANGLLIYRDRLRINRFAWPKILKISYKRSNFYIKIRPGEYEQFESTIGFKLPNHRSAKRLWKVCIEHHTFFRLVSPEPPPKGFLVMGSKFRYSGRTQAQTRQASALIDRPAPFFERSSSKRYTMSRSLDGAEFSRPASVSENHDAGPDGDKRDEDGESGGQRSEAEEGEVRTPTKIKELKPEQETTPRHKQEFLDKPEDVLLKHQASINELKRTLKEPNSKLIHRDRDWERERRLPSSPASPSPKGTPEKANERAGLREGSEEKVKPPRPRAPESDTGDEDQDQERDTVFLKDNHLAIERKCSSITVSSTSSLEAEVDFTVIGDYHGSAFEDFSRSLPELDRDKSDSDTEGLLFSRDLNKGAPSQDDESGGIEDSPDRGACSTPDMPQFEPVKTETMTVSSLAIRKKIEPEAVLQTRVSAMDNTQQVDGSASVGREFIATTPSITTETISTTMENSLKSGKGAAAMIPGPQTVATEIRSLSPIIGKDVLTSTYGATAETLSTSTTTHVTKTVKGGFSETRIEKRIIITGDEDVDQDQALALAIKEAKLQHPDMLVTKAVVYRETDPSPEERDKKPQES.

Met-1 carries the post-translational modification N-acetylmethionine. Residues 1-88 (MTTETGPDSE…TPSKAQKSPQ (88 aa)) form a disordered region. The span at 17–35 (EAPQQPEAAAAVTTPVTPA) shows a compositional bias: low complexity. A Phosphothreonine modification is found at Thr-30. The span at 38–50 (GHPEANSNEKHPS) shows a compositional bias: basic and acidic residues. Phosphoserine is present on Ser-75. Over residues 76-87 (ERTTPSKAQKSP) the composition is skewed to polar residues. Position 79 is a phosphothreonine (Thr-79). One can recognise an FERM domain in the interval 97–378 (AICRVTLLDA…EHHTFFRLVS (282 aa)). A Phosphotyrosine modification is found at Tyr-343. A phosphoserine mark is found at Ser-378, Ser-430, and Ser-437. Positions 428 to 501 (SRSLDGAEFS…HKQEFLDKPE (74 aa)) are disordered. Over residues 444-457 (ENHDAGPDGDKRDE) the composition is skewed to basic and acidic residues. Phosphoserine occurs at positions 461 and 466. Residues 466-501 (SEAEEGEVRTPTKIKELKPEQETTPRHKQEFLDKPE) show a composition bias toward basic and acidic residues. Residue Thr-475 is modified to Phosphothreonine. The interval 483–541 (KPEQETTPRHKQEFLDKPEDVLLKHQASINELKRTLKEPNSKLIHRDRDWERERRLPSS) is spectrin--actin-binding. Ser-510 is subject to Phosphoserine. A compositionally biased stretch (basic and acidic residues) spans 514-538 (LKRTLKEPNSKLIHRDRDWERERRL). The tract at residues 514–596 (LKRTLKEPNS…QERDTVFLKD (83 aa)) is disordered. Phosphoserine is present on residues Ser-540, Ser-541, Ser-544, and Ser-546. Residue Thr-550 is modified to Phosphothreonine. The segment covering 550–577 (TPEKANERAGLREGSEEKVKPPRPRAPE) has biased composition (basic and acidic residues). Residues Ser-564 and Ser-578 each carry the phosphoserine modification. Thr-580 is subject to Phosphothreonine. 7 positions are modified to phosphoserine: Ser-639, Ser-648, Ser-650, Ser-667, Ser-672, Ser-678, and Ser-685. The segment at 642–699 (ELDRDKSDSDTEGLLFSRDLNKGAPSQDDESGGIEDSPDRGACSTPDMPQFEPVKTET) is disordered. Thr-686 carries the phosphothreonine modification. A phosphoserine mark is found at Ser-722, Ser-784, and Ser-870. Residues 746–881 (SITTETISTT…EERDKKPQES (136 aa)) form a C-terminal (CTD) region.

In terms of assembly, interacts with AGAP2. In terms of tissue distribution, highest expression in brain, lower in heart, kidney, pancreas, placenta, lung and skeletal muscle.

It is found in the cytoplasm. It localises to the cytoskeleton. Its function is as follows. May function to confer stability and plasticity to neuronal membrane via multiple interactions, including the spectrin-actin-based cytoskeleton, integral membrane channels and membrane-associated guanylate kinases. The chain is Band 4.1-like protein 1 from Homo sapiens (Human).